A 213-amino-acid chain; its full sequence is Uridine kinase (213 aa).

ATP is bound at residue 15–22 (GASASGKS).

This sequence belongs to the uridine kinase family.

It localises to the cytoplasm. It catalyses the reaction uridine + ATP = UMP + ADP + H(+). The enzyme catalyses cytidine + ATP = CMP + ADP + H(+). It functions in the pathway pyrimidine metabolism; CTP biosynthesis via salvage pathway; CTP from cytidine: step 1/3. The protein operates within pyrimidine metabolism; UMP biosynthesis via salvage pathway; UMP from uridine: step 1/1. The protein is Uridine kinase of Salmonella paratyphi A (strain ATCC 9150 / SARB42).